We begin with the raw amino-acid sequence, 1319 residues long: Son of sevenless homolog 1 (1319 aa).

Residues 200–390 (TYYDLVKAFM…LNVQSGMEKI (191 aa)) enclose the DH domain. The region spanning 444-548 (FIMEGTLTRV…AALISLQYRS (105 aa)) is the PH domain. Residues 597–741 (GIPIIKAGTV…SITKIIQRKK (145 aa)) form the N-terminal Ras-GEF domain. Residues 780-1019 (HPIEIARQLT…FNKSLEIEPR (240 aa)) enclose the Ras-GEF domain. A disordered region spans residues 1019-1101 (RHPKPLPRFP…ASGTSSNTDV (83 aa)). Ser-1078 and Ser-1082 each carry phosphoserine. Ser-1120 and Ser-1147 each carry phosphoserine; by RPS6KA3. Positions 1121 to 1319 (VSSISLSKGT…PPLLENAHSS (199 aa)) are disordered. Residues Ser-1164, Ser-1196, and Ser-1215 each carry the phosphoserine modification. The span at 1194 to 1203 (PESPPLLPPR) shows a compositional bias: pro residues. Residues 1238–1250 (SPSPFTPPPPQTP) are compositionally biased toward pro residues. Phosphoserine is present on Ser-1261. Basic and acidic residues predominate over residues 1296–1309 (YKREHTHPSMHRDG).

As to quaternary structure, interacts (via C-terminus) with GRB2 (via SH3 domain). Forms a complex with phosphorylated MUC1 and GRB2 (via its SH3 domains). Interacts with phosphorylated LAT2. Interacts with NCK1 and NCK2. Part of a complex consisting of ABI1, EPS8 and SOS1. Interacts (Ser-1120 and Ser-1147 phosphorylated form) with YWHAB and YWHAE. In terms of processing, phosphorylation at Ser-1120 and Ser-1147 by RPS6KA3 create YWHAB and YWHAE binding sites and which contribute to the negative regulation of EGF-induced MAPK1/3 phosphorylation. In terms of tissue distribution, expressed in most embryonic and adult tissues.

In terms of biological role, promotes the exchange of Ras-bound GDP by GTP. Probably by promoting Ras activation, regulates phosphorylation of MAP kinase MAPK3 in response to EGF. Catalytic component of a trimeric complex that participates in transduction of signals from Ras to Rac by promoting the Rac-specific guanine nucleotide exchange factor (GEF) activity. The sequence is that of Son of sevenless homolog 1 (Sos1) from Mus musculus (Mouse).